Reading from the N-terminus, the 457-residue chain is Reticulon-like protein B18 (457 aa).

The interval 94 to 183 (AAVTARRSKT…SPSSDQPQDV (90 aa)) is disordered. Residues 124–136 (LRSEAMVDTKENT) are compositionally biased toward basic and acidic residues. The segment covering 149 to 163 (NQRKQKKLGRSKKEK) has biased composition (basic residues). Positions 166–183 (SVPLLASPSPSSDQPQDV) are enriched in low complexity. Positions 195-385 (ISDLIMWRDV…AFWNLTSLKT (191 aa)) constitute a Reticulon domain. The next 4 membrane-spanning stretches (helical) occupy residues 208 to 228 (TLWF…AKGF), 230 to 250 (FSVF…SFLS), 314 to 334 (YGYL…SFTI), and 377 to 397 (FWNL…VVVI). The disordered stretch occupies residues 407–457 (DSEDEEEKKQQEKTHPEQQKSPEDKSTSPRSAEEEQALVLVAETKAPKKLY). The segment covering 413–439 (EKKQQEKTHPEQQKSPEDKSTSPRSAE) has biased composition (basic and acidic residues).

The protein resides in the endoplasmic reticulum membrane. This chain is Reticulon-like protein B18 (RTNLB18), found in Arabidopsis thaliana (Mouse-ear cress).